Reading from the N-terminus, the 295-residue chain is Phosphatidylserine decarboxylase proenzyme (295 aa).

Catalysis depends on charge relay system; for autoendoproteolytic cleavage activity residues D101, H158, and S262. S262 functions as the Schiff-base intermediate with substrate; via pyruvic acid; for decarboxylase activity in the catalytic mechanism. Pyruvic acid (Ser); by autocatalysis is present on S262.

It belongs to the phosphatidylserine decarboxylase family. PSD-B subfamily. Prokaryotic type I sub-subfamily. Heterodimer of a large membrane-associated beta subunit and a small pyruvoyl-containing alpha subunit. It depends on pyruvate as a cofactor. Post-translationally, is synthesized initially as an inactive proenzyme. Formation of the active enzyme involves a self-maturation process in which the active site pyruvoyl group is generated from an internal serine residue via an autocatalytic post-translational modification. Two non-identical subunits are generated from the proenzyme in this reaction, and the pyruvate is formed at the N-terminus of the alpha chain, which is derived from the carboxyl end of the proenzyme. The autoendoproteolytic cleavage occurs by a canonical serine protease mechanism, in which the side chain hydroxyl group of the serine supplies its oxygen atom to form the C-terminus of the beta chain, while the remainder of the serine residue undergoes an oxidative deamination to produce ammonia and the pyruvoyl prosthetic group on the alpha chain. During this reaction, the Ser that is part of the protease active site of the proenzyme becomes the pyruvoyl prosthetic group, which constitutes an essential element of the active site of the mature decarboxylase.

It localises to the cell membrane. It catalyses the reaction a 1,2-diacyl-sn-glycero-3-phospho-L-serine + H(+) = a 1,2-diacyl-sn-glycero-3-phosphoethanolamine + CO2. The protein operates within phospholipid metabolism; phosphatidylethanolamine biosynthesis; phosphatidylethanolamine from CDP-diacylglycerol: step 2/2. Catalyzes the formation of phosphatidylethanolamine (PtdEtn) from phosphatidylserine (PtdSer). The sequence is that of Phosphatidylserine decarboxylase proenzyme from Pasteurella multocida (strain Pm70).